Here is a 316-residue protein sequence, read N- to C-terminus: Acetyl-coenzyme A carboxylase carboxyl transferase subunit alpha (316 aa).

The CoA carboxyltransferase C-terminal domain maps to 40-290 (KARKELQRIY…RERFAHHLQE (251 aa)).

It belongs to the AccA family. Acetyl-CoA carboxylase is a heterohexamer composed of biotin carboxyl carrier protein (AccB), biotin carboxylase (AccC) and two subunits each of ACCase subunit alpha (AccA) and ACCase subunit beta (AccD).

Its subcellular location is the cytoplasm. The enzyme catalyses N(6)-carboxybiotinyl-L-lysyl-[protein] + acetyl-CoA = N(6)-biotinyl-L-lysyl-[protein] + malonyl-CoA. The protein operates within lipid metabolism; malonyl-CoA biosynthesis; malonyl-CoA from acetyl-CoA: step 1/1. Its function is as follows. Component of the acetyl coenzyme A carboxylase (ACC) complex. First, biotin carboxylase catalyzes the carboxylation of biotin on its carrier protein (BCCP) and then the CO(2) group is transferred by the carboxyltransferase to acetyl-CoA to form malonyl-CoA. The protein is Acetyl-coenzyme A carboxylase carboxyl transferase subunit alpha of Acidithiobacillus ferrooxidans (strain ATCC 23270 / DSM 14882 / CIP 104768 / NCIMB 8455) (Ferrobacillus ferrooxidans (strain ATCC 23270)).